We begin with the raw amino-acid sequence, 241 residues long: DnaA regulatory inactivator Hda (241 aa).

Belongs to the DnaA family. HdA subfamily. The active form seems to be an ADP-bound monomer. Forms the RIDA complex (regulatory inactivation of DnaA) of ATP-DnaA, ADP-Hda and the DNA-loaded beta sliding clamp (dnaN).

In terms of biological role, mediates the interaction of DNA replication initiator protein DnaA with DNA polymerase subunit beta sliding clamp (dnaN). Stimulates hydrolysis of ATP-DnaA to ADP-DnaA, rendering DnaA inactive for reinitiation, a process called regulatory inhibition of DnaA or RIDA. In Salmonella arizonae (strain ATCC BAA-731 / CDC346-86 / RSK2980), this protein is DnaA regulatory inactivator Hda.